We begin with the raw amino-acid sequence, 177 residues long: Putative pre-16S rRNA nuclease (177 aa).

Belongs to the YqgF nuclease family.

The protein localises to the cytoplasm. Could be a nuclease involved in processing of the 5'-end of pre-16S rRNA. The polypeptide is Putative pre-16S rRNA nuclease (Psychrobacter sp. (strain PRwf-1)).